The sequence spans 122 residues: Large ribosomal subunit protein uL14 (122 aa).

The protein belongs to the universal ribosomal protein uL14 family. As to quaternary structure, part of the 50S ribosomal subunit. Forms a cluster with proteins L3 and L19. In the 70S ribosome, L14 and L19 interact and together make contacts with the 16S rRNA in bridges B5 and B8.

In terms of biological role, binds to 23S rRNA. Forms part of two intersubunit bridges in the 70S ribosome. In Chelativorans sp. (strain BNC1), this protein is Large ribosomal subunit protein uL14.